A 100-amino-acid chain; its full sequence is Urease subunit gamma (100 aa).

The protein belongs to the urease gamma subunit family. As to quaternary structure, heterotrimer of UreA (gamma), UreB (beta) and UreC (alpha) subunits. Three heterotrimers associate to form the active enzyme.

Its subcellular location is the cytoplasm. The enzyme catalyses urea + 2 H2O + H(+) = hydrogencarbonate + 2 NH4(+). The protein operates within nitrogen metabolism; urea degradation; CO(2) and NH(3) from urea (urease route): step 1/1. This Lachnoclostridium phytofermentans (strain ATCC 700394 / DSM 18823 / ISDg) (Clostridium phytofermentans) protein is Urease subunit gamma.